We begin with the raw amino-acid sequence, 176 residues long: MPVNALTNSFVLGAAGGGVEWGTVIVTVITFAILLALLKKFAWGPLKEVMDKRERDINRDIDEAEEAKLNAQKLEEENKKTLKQTQDEVQRILEDARVQARKQHEEIIHEANIRANGMIETAQSEINSEKERALADINNQVSELSVLIASKVLKKEISEQDQKELVDKYLKEAGDK.

A helical transmembrane segment spans residues 18–38 (GVEWGTVIVTVITFAILLALL).

Belongs to the ATPase B chain family. As to quaternary structure, F-type ATPases have 2 components, F(1) - the catalytic core - and F(0) - the membrane proton channel. F(1) has five subunits: alpha(3), beta(3), gamma(1), delta(1), epsilon(1). F(0) has three main subunits: a(1), b(2) and c(10-14). The alpha and beta chains form an alternating ring which encloses part of the gamma chain. F(1) is attached to F(0) by a central stalk formed by the gamma and epsilon chains, while a peripheral stalk is formed by the delta and b chains.

The protein resides in the cell membrane. Its function is as follows. F(1)F(0) ATP synthase produces ATP from ADP in the presence of a proton or sodium gradient. F-type ATPases consist of two structural domains, F(1) containing the extramembraneous catalytic core and F(0) containing the membrane proton channel, linked together by a central stalk and a peripheral stalk. During catalysis, ATP synthesis in the catalytic domain of F(1) is coupled via a rotary mechanism of the central stalk subunits to proton translocation. Functionally, component of the F(0) channel, it forms part of the peripheral stalk, linking F(1) to F(0). The protein is ATP synthase subunit b of Staphylococcus haemolyticus (strain JCSC1435).